The following is a 375-amino-acid chain: Tyrosine--tRNA ligase (375 aa).

5 residues coordinate L-tyrosine: tyrosine 37, tyrosine 168, glutamine 172, aspartate 175, and glutamine 190. The 'KMSKS' region motif lies at 251–255; it reads KMSKS. Lysine 254 provides a ligand contact to ATP.

The protein belongs to the class-I aminoacyl-tRNA synthetase family. TyrS type 4 subfamily. Homodimer.

It localises to the cytoplasm. The catalysed reaction is tRNA(Tyr) + L-tyrosine + ATP = L-tyrosyl-tRNA(Tyr) + AMP + diphosphate + H(+). Catalyzes the attachment of tyrosine to tRNA(Tyr) in a two-step reaction: tyrosine is first activated by ATP to form Tyr-AMP and then transferred to the acceptor end of tRNA(Tyr). The polypeptide is Tyrosine--tRNA ligase (Thermococcus kodakarensis (strain ATCC BAA-918 / JCM 12380 / KOD1) (Pyrococcus kodakaraensis (strain KOD1))).